Consider the following 456-residue polypeptide: UDP-N-acetylmuramate--L-alanine ligase (456 aa).

112–118 (GTHGKTT) serves as a coordination point for ATP.

This sequence belongs to the MurCDEF family.

Its subcellular location is the cytoplasm. It carries out the reaction UDP-N-acetyl-alpha-D-muramate + L-alanine + ATP = UDP-N-acetyl-alpha-D-muramoyl-L-alanine + ADP + phosphate + H(+). Its pathway is cell wall biogenesis; peptidoglycan biosynthesis. In terms of biological role, cell wall formation. This Trichlorobacter lovleyi (strain ATCC BAA-1151 / DSM 17278 / SZ) (Geobacter lovleyi) protein is UDP-N-acetylmuramate--L-alanine ligase.